The primary structure comprises 296 residues: Small ribosomal subunit protein uS2 (296 aa).

The segment at T252 to T296 is disordered.

This sequence belongs to the universal ribosomal protein uS2 family.

The polypeptide is Small ribosomal subunit protein uS2 (rpsB) (Rickettsia prowazekii (strain Madrid E)).